Reading from the N-terminus, the 400-residue chain is Argininosuccinate synthase (400 aa).

9 to 17 serves as a coordination point for ATP; the sequence is AYSGGLDTS. Y87 is an L-citrulline binding site. Residue G117 coordinates ATP. Residues T119, N123, and D124 each coordinate L-aspartate. N123 is an L-citrulline binding site. Residues R127, S176, S185, E261, and Y273 each coordinate L-citrulline.

The protein belongs to the argininosuccinate synthase family. Type 1 subfamily. Homotetramer.

It localises to the cytoplasm. The enzyme catalyses L-citrulline + L-aspartate + ATP = 2-(N(omega)-L-arginino)succinate + AMP + diphosphate + H(+). It participates in amino-acid biosynthesis; L-arginine biosynthesis; L-arginine from L-ornithine and carbamoyl phosphate: step 2/3. This Chlorobium limicola (strain DSM 245 / NBRC 103803 / 6330) protein is Argininosuccinate synthase.